Reading from the N-terminus, the 1296-residue chain is Capping protein, Arp2/3 and myosin-I linker protein 2 (1296 aa).

15 LRR repeats span residues 63–87, 88–110, 248–271, 273–296, 305–328, 363–386, 395–415, 426–448, 453–477, 480–506, 515–538, 542–565, 570–594, 598–621, and 836–859; these read DCTF…TFEL, ESLP…AQHV, ELVL…LAGH, NSGL…ALGR, DSTL…DSGG, CSSL…AAPA, TRML…ALRA, IHDL…VIQD, AGAL…VLAI, SRSL…VLHR, DCPL…LIRA, NPKL…MLAK, NTRL…VAQA, NHSL…RPEL, and TMAP…GLEE. The interval 507-601 is tropomodulin-like; that stretch reads IAQLMQDDDC…AQALEQNHSL (95 aa). The segment at 975–1002 is necessary for localization at the cell membrane; the sequence is ATPVPRTLRKKLGTLFAFKKPRSTRGPR. Residues 988–1296 form a disordered region; sequence TLFAFKKPRS…TDQRGGGPNP (309 aa). Phosphoserine is present on Ser-1008. Composition is skewed to basic and acidic residues over residues 1079-1091 and 1118-1134; these read RPDK…RGDT and ESKR…KAGS. Ser-1134 is modified (phosphoserine). The residue at position 1145 (Thr-1145) is a Phosphothreonine. Residues 1176–1185 are compositionally biased toward polar residues; sequence TWKTLGQQLN. Arg-1191 carries the omega-N-methylarginine modification. Composition is skewed to pro residues over residues 1199–1209 and 1267–1285; these read PGPPSPCPSPS and PLPP…PPSP. Phosphoserine is present on residues Ser-1203 and Ser-1281.

This sequence belongs to the CARMIL family. In terms of assembly, forms homodimers. Interacts (via C-terminus) with heterodimeric capping protein (CP); the interaction inhibits CP activity and hence promotes actin polymerization at the barbed end of actin filaments.

It is found in the cytoplasm. Its subcellular location is the cytoskeleton. The protein resides in the cell membrane. The protein localises to the cell projection. It localises to the lamellipodium. It is found in the ruffle. Its function is as follows. Cell membrane-cytoskeleton-associated protein that plays a role in the regulation of actin polymerization at the barbed end of actin filaments. Prevents F-actin heterodimeric capping protein (CP) activity at the leading edges of migrating cells, and hence generates uncapped barbed ends and enhances actin polymerization. Plays a role in cell protrusion formations; involved in cell polarity, lamellipodial assembly, membrane ruffling and macropinosome formations. Involved as well in cell migration and invadopodia formation during wound healing. Required for CD28-mediated stimulation of NF-kappa-B signaling, involved in naive T cells activation, maturation into T memory cells, and differentiation into T helper cells. Required for CD28-mediated differentiation of T regulatory cells. In Mus musculus (Mouse), this protein is Capping protein, Arp2/3 and myosin-I linker protein 2.